A 461-amino-acid chain; its full sequence is MVNDRWKTMGGAAQLEDRPRDKPQRPSCGYVLCTVLLALAVLLAVAVTGAVLFLNHAHAPGTAPPPVVSTGAASANSALVTVERADSSHLSILIDPRCPDLTDSFARLESAQASVLQALTEHQAQPRLVGDQEQELLDTLADQLPRLLARASELQTECMGLRKGHGTLGQGLSALQSEQGRLIQLLSESQGHMAHLVNSVSDILDALQRDRGLGRPRNKADLQRAPARGTRPRGCATGSRPRDCLDVLLSGQQDDGVYSVFPTHYPAGFQVYCDMRTDGGGWTVFQRREDGSVNFFRGWDAYRDGFGRLTGEHWLGLKRIHALTTQAAYELHVDLEDFENGTAYARYGSFGVGLFSVDPEEDGYPLTVADYSGTAGDSLLKHSGMRFTTKDRDSDHSENNCAAFYRGAWWYRNCHTSNLNGQYLRGAHASYADGVEWSSWTGWQYSLKFSEMKIRPVREDR.

The tract at residues 1-24 (MVNDRWKTMGGAAQLEDRPRDKPQ) is disordered. The Cytoplasmic segment spans residues 1–33 (MVNDRWKTMGGAAQLEDRPRDKPQRPSCGYVLC). Basic and acidic residues predominate over residues 15–24 (LEDRPRDKPQ). Residues 34 to 54 (TVLLALAVLLAVAVTGAVLFL) traverse the membrane as a helical; Signal-anchor for type II membrane protein segment. Topologically, residues 55–461 (NHAHAPGTAP…MKIRPVREDR (407 aa)) are extracellular. Positions 214 to 238 (GRPRNKADLQRAPARGTRPRGCATG) are disordered. The region spanning 235–458 (CATGSRPRDC…FSEMKIRPVR (224 aa)) is the Fibrinogen C-terminal domain. An intrachain disulfide couples cysteine 244 to cysteine 273. N-linked (GlcNAc...) asparagine glycosylation is present at asparagine 340. Ca(2+) contacts are provided by aspartate 393 and aspartate 395. An intrachain disulfide couples cysteine 401 to cysteine 414.

In terms of assembly, homotetramer; disulfide-linked. As to expression, expressed in the small and large intestinal epithelial cells with a highly polarized localization to the apical surface corresponding to the brush border and in the ducts of the salivary gland.

The protein localises to the membrane. In terms of biological role, acetyl group-binding receptor which shows a high-affinity and calcium-dependent binding to acetylated structures such as chitin, some N-acetylated carbohydrates, and amino acids, but not to their non-acetylated counterparts. Can facilitate the endocytosis of acetylated components. This is Fibrinogen C domain-containing protein 1 (FIBCD1) from Homo sapiens (Human).